A 354-amino-acid chain; its full sequence is Membrane progestin receptor beta (354 aa).

The Cytoplasmic portion of the chain corresponds to 1-75 (MTTAILERLS…FFSLFQKHNE (75 aa)). Residues 76–96 (VVNVWTHLLAALAVLLRFWAF) form a helical membrane-spanning segment. Over 97–111 (AEAEALPWASTHSLP) the chain is Extracellular. A helical transmembrane segment spans residues 112-132 (LLLFILSSITYLTCSLLAHLL). Residues 133-174 (QSKSELSHYTFYFVDYVGVSVYQYGSALAHFFYSSDQAWYDR) are Cytoplasmic-facing. A helical membrane pass occupies residues 175-195 (FWLFFLPAAAFCGWLSCAGCC). The Extracellular portion of the chain corresponds to 196 to 213 (YAKYRYRRPYPVMRKICQ). Residues 214–234 (VVPAGLAFILDISPVAHRVAL) form a helical membrane-spanning segment. Residues 235–243 (CHLAGCQEQ) lie on the Cytoplasmic side of the membrane. Residues 244 to 264 (AAWYHTLQILFFLVSAYFFSC) traverse the membrane as a helical segment. At 265-283 (PVPEKYFPGSCDIVGHGHQ) the chain is on the extracellular side. The chain crosses the membrane as a helical span at residues 284-304 (IFHAFLSICTLSQLEAILLDY). At 305–319 (QGRQEIFLQRHGPLS) the chain is on the cytoplasmic side. A helical membrane pass occupies residues 320–340 (VHMACLSFFFLAACSAATAAL). Residues 341–354 (LRHKVKARLTKKDS) lie on the Extracellular side of the membrane.

This sequence belongs to the ADIPOR family. As to expression, highly expressed in the hypothalamus. Also expressed in spinal cord, kidney and testis.

The protein localises to the cell membrane. Its function is as follows. Plasma membrane progesterone (P4) receptor coupled to G proteins. Seems to act through a G(i) mediated pathway. May be involved in oocyte maturation. Also binds dehydroepiandrosterone (DHEA), pregnanolone, pregnenolone and allopregnanolone. This chain is Membrane progestin receptor beta, found in Homo sapiens (Human).